Consider the following 265-residue polypeptide: Thiazole synthase (265 aa).

Catalysis depends on Lys106, which acts as the Schiff-base intermediate with DXP. Residues Gly167, Ala193–Gly194, and Asn215–Ser216 contribute to the 1-deoxy-D-xylulose 5-phosphate site.

This sequence belongs to the ThiG family. Homotetramer. Forms heterodimers with either ThiH or ThiS.

It localises to the cytoplasm. The catalysed reaction is [ThiS sulfur-carrier protein]-C-terminal-Gly-aminoethanethioate + 2-iminoacetate + 1-deoxy-D-xylulose 5-phosphate = [ThiS sulfur-carrier protein]-C-terminal Gly-Gly + 2-[(2R,5Z)-2-carboxy-4-methylthiazol-5(2H)-ylidene]ethyl phosphate + 2 H2O + H(+). Its pathway is cofactor biosynthesis; thiamine diphosphate biosynthesis. Functionally, catalyzes the rearrangement of 1-deoxy-D-xylulose 5-phosphate (DXP) to produce the thiazole phosphate moiety of thiamine. Sulfur is provided by the thiocarboxylate moiety of the carrier protein ThiS. In vitro, sulfur can be provided by H(2)S. This Prochlorococcus marinus (strain MIT 9515) protein is Thiazole synthase.